The chain runs to 887 residues: DNA gyrase subunit A (887 aa).

The 467-residue stretch at 35–501 (LPDVRDGLKP…GFEDLEDEDL (467 aa)) folds into the Topo IIA-type catalytic domain. Tyrosine 123 (O-(5'-phospho-DNA)-tyrosine intermediate) is an active-site residue. Residues 528-534 (QNRGGRG) carry the GyrA-box motif. The segment at 811-865 (KEDAEDETNEDEQSTSTVSEDGTEQQREAVVNDETPGNAIHTEVIDSEENDEDGR) is disordered. Acidic residues predominate over residues 813–823 (DAEDETNEDEQ).

This sequence belongs to the type II topoisomerase GyrA/ParC subunit family. Heterotetramer, composed of two GyrA and two GyrB chains. In the heterotetramer, GyrA contains the active site tyrosine that forms a transient covalent intermediate with DNA, while GyrB binds cofactors and catalyzes ATP hydrolysis.

The protein resides in the cytoplasm. It carries out the reaction ATP-dependent breakage, passage and rejoining of double-stranded DNA.. Its function is as follows. A type II topoisomerase that negatively supercoils closed circular double-stranded (ds) DNA in an ATP-dependent manner to modulate DNA topology and maintain chromosomes in an underwound state. Negative supercoiling favors strand separation, and DNA replication, transcription, recombination and repair, all of which involve strand separation. Also able to catalyze the interconversion of other topological isomers of dsDNA rings, including catenanes and knotted rings. Type II topoisomerases break and join 2 DNA strands simultaneously in an ATP-dependent manner. The polypeptide is DNA gyrase subunit A (Staphylococcus aureus (strain MSSA476)).